The following is a 562-amino-acid chain: Probable malate:quinone oxidoreductase (562 aa).

Residues 535–562 (SATPADPTIAPKNQHSTTYNANSEMQAL) form a disordered region. Residues 545-562 (PKNQHSTTYNANSEMQAL) are compositionally biased toward polar residues.

Belongs to the MQO family. FAD is required as a cofactor.

The catalysed reaction is (S)-malate + a quinone = a quinol + oxaloacetate. It functions in the pathway carbohydrate metabolism; tricarboxylic acid cycle; oxaloacetate from (S)-malate (quinone route): step 1/1. The protein is Probable malate:quinone oxidoreductase of Xylella fastidiosa (strain M23).